Reading from the N-terminus, the 290-residue chain is UPF0761 membrane protein YihY (290 aa).

6 helical membrane passes run 44 to 64, 104 to 124, 140 to 160, 183 to 203, 210 to 230, and 244 to 264; these read LLSLVPLVAVVFALFAAFPMF, VGACGLIVTALLLMYSIDSAL, FAVYWMILTLGPLLAGASLAI, IFPLLLSWISFWLLYSIVPTI, AIVGAFVAALLFEAGKKGFAL, and VLAVIPILFVWVYWTWCIVLL.

This sequence belongs to the UPF0761 family.

The protein resides in the cell inner membrane. This chain is UPF0761 membrane protein YihY, found in Escherichia coli O139:H28 (strain E24377A / ETEC).